A 416-amino-acid chain; its full sequence is UDP-N-acetylglucosamine 1-carboxyvinyltransferase (416 aa).

22–23 (KN) provides a ligand contact to phosphoenolpyruvate. Arg92 contributes to the UDP-N-acetyl-alpha-D-glucosamine binding site. Catalysis depends on Cys116, which acts as the Proton donor. 2-(S-cysteinyl)pyruvic acid O-phosphothioketal is present on Cys116. Asp306 and Ile328 together coordinate UDP-N-acetyl-alpha-D-glucosamine.

The protein belongs to the EPSP synthase family. MurA subfamily.

Its subcellular location is the cytoplasm. The enzyme catalyses phosphoenolpyruvate + UDP-N-acetyl-alpha-D-glucosamine = UDP-N-acetyl-3-O-(1-carboxyvinyl)-alpha-D-glucosamine + phosphate. The protein operates within cell wall biogenesis; peptidoglycan biosynthesis. Its function is as follows. Cell wall formation. Adds enolpyruvyl to UDP-N-acetylglucosamine. The protein is UDP-N-acetylglucosamine 1-carboxyvinyltransferase of Buchnera aphidicola subsp. Baizongia pistaciae (strain Bp).